The primary structure comprises 297 residues: 4-diphosphocytidyl-2-C-methyl-D-erythritol kinase (297 aa).

The active site involves K10. 95 to 105 (PVAGGMAGGSA) serves as a coordination point for ATP. D137 is a catalytic residue.

This sequence belongs to the GHMP kinase family. IspE subfamily.

It catalyses the reaction 4-CDP-2-C-methyl-D-erythritol + ATP = 4-CDP-2-C-methyl-D-erythritol 2-phosphate + ADP + H(+). The protein operates within isoprenoid biosynthesis; isopentenyl diphosphate biosynthesis via DXP pathway; isopentenyl diphosphate from 1-deoxy-D-xylulose 5-phosphate: step 3/6. Functionally, catalyzes the phosphorylation of the position 2 hydroxy group of 4-diphosphocytidyl-2C-methyl-D-erythritol. This is 4-diphosphocytidyl-2-C-methyl-D-erythritol kinase from Streptomyces avermitilis (strain ATCC 31267 / DSM 46492 / JCM 5070 / NBRC 14893 / NCIMB 12804 / NRRL 8165 / MA-4680).